The following is a 311-amino-acid chain: MKVAVLGAAGGIGQALALLLKTQLPAGSHLSLYDIAPVTPGVAVDLSHIPTAVEIKGFAGEDPTPALVGADVVLISAGVARKPGMDRSDLFNINAGIVRNLIEKVAATCPTALVGIITNPVNTTVAIAAEVMKKAGVYDKNRLFGITTLDVIRSETFIAELKGLNVADVKVNVIGGHSGVTILPLLSQVEGVTFTDEEVASLTTRIQNAGTEVVEAKAGGGSATLSMGQAACRFGLSLVRGLQGEANIVECAYVDGGSEHAEFFAQPVLLGKNGIEKVLPYGEVSAFEANARDSMLDTLKGDIKLGVDFVK.

NAD(+) contacts are provided by residues 7 to 13 (GAAGGIG) and Asp34. Residues Arg81 and Arg87 each coordinate substrate. Residues Asn94 and 117–119 (ITN) contribute to the NAD(+) site. Positions 119 and 153 each coordinate substrate. His177 (proton acceptor) is an active-site residue. NAD(+) is bound at residue Met227.

The protein belongs to the LDH/MDH superfamily. MDH type 1 family. Homodimer.

The catalysed reaction is (S)-malate + NAD(+) = oxaloacetate + NADH + H(+). Catalyzes the reversible oxidation of malate to oxaloacetate. This Shewanella baltica (strain OS155 / ATCC BAA-1091) protein is Malate dehydrogenase.